The sequence spans 595 residues: APOBEC1 complementation factor (595 aa).

3 RRM domains span residues 56 to 134, 136 to 218, and 231 to 303; these read CEIF…ASVD, CRLF…WAEP, and KILY…LAKP. The tract at residues 360–409 is required for nuclear localization; that stretch reads HFPATKGHLSNRALIRTPSVREIYMNVPVGAAGVRGLGGRGYLAYTGLGR.

As to quaternary structure, part of the apolipoprotein B mRNA editing complex with APOBEC1. Interacts with TNPO2; TNPO2 may be responsible for transport of A1CF into the nucleus. Interacts with SYNCRIP. Interacts with CELF2/CUGBP2. Interacts with RBM47. In terms of tissue distribution, expressed primarily in liver, small intestine and kidney.

It localises to the nucleus. The protein resides in the endoplasmic reticulum. Its subcellular location is the cytoplasm. Functionally, essential component of the apolipoprotein B mRNA editing enzyme complex which is responsible for the postranscriptional editing of a CAA codon for Gln to a UAA codon for stop in APOB mRNA. Binds to APOB mRNA and is probably responsible for docking the catalytic subunit, APOBEC1, to the mRNA to allow it to deaminate its target cytosine. The complex also seems to protect the edited APOB mRNA from nonsense-mediated decay. The protein is APOBEC1 complementation factor (A1cf) of Mus musculus (Mouse).